Here is a 447-residue protein sequence, read N- to C-terminus: Alpha-1,3-mannosyl-glycoprotein 2-beta-N-acetylglucosaminyltransferase (447 aa).

Topologically, residues Met-1–Ser-6 are cytoplasmic. Residues Ala-7–Trp-29 traverse the membrane as a helical; Signal-anchor for type II membrane protein segment. The Lumenal portion of the chain corresponds to Thr-30–Thr-447. Cys-115 and Cys-145 are disulfide-bonded. Positions 117, 144, 190, and 212 each coordinate substrate. Asp-213 lines the Mn(2+) pocket. Cys-239 and Cys-305 are disulfide-bonded. Asp-291 (proton acceptor) is an active-site residue. Ser-322 is a substrate binding site.

The protein belongs to the glycosyltransferase 13 family. As to quaternary structure, interacts with MGAT4D. Interacts with BRI3. The cofactor is Mn(2+).

It localises to the golgi apparatus membrane. Its subcellular location is the cytoplasm. The protein resides in the perinuclear region. The catalysed reaction is N(4)-(alpha-D-Man-(1-&gt;3)-[alpha-D-Man-(1-&gt;3)-[alpha-D-Man-(1-&gt;6)]-alpha-D-Man-(1-&gt;6)]-beta-D-Man-(1-&gt;4)-beta-D-GlcNAc-(1-&gt;4)-beta-D-GlcNAc)-L-asparaginyl-[protein] (N-glucan mannose isomer 5A1,2) + UDP-N-acetyl-alpha-D-glucosamine = N(4)-{beta-D-GlcNAc-(1-&gt;2)-alpha-D-Man-(1-&gt;3)-[alpha-D-Man-(1-&gt;3)-[alpha-D-Man-(1-&gt;6)]-alpha-D-Man-(1-&gt;6)]-beta-D-Man-(1-&gt;4)-beta-D-GlcNAc-(1-&gt;4)-beta-D-GlcNAc}-L-asparaginyl-[protein] + UDP + H(+). It participates in protein modification; protein glycosylation. In terms of biological role, initiates complex N-linked carbohydrate formation. Essential for the conversion of high-mannose to hybrid and complex N-glycans. The chain is Alpha-1,3-mannosyl-glycoprotein 2-beta-N-acetylglucosaminyltransferase (MGAT1) from Oryctolagus cuniculus (Rabbit).